A 132-amino-acid polypeptide reads, in one-letter code: Interleukin-5 (132 aa).

The first 19 residues, 1 to 19 (MHLRLTLVALGAAYVCANA), serve as a signal peptide directing secretion. 2 N-linked (GlcNAc...) asparagine glycosylation sites follow: Asn-74 and Asn-88.

The protein belongs to the IL-5 family. As to quaternary structure, homodimer; disulfide-linked. Interacts with IL5RA. Interacts with CSF2RB.

Its subcellular location is the secreted. Its function is as follows. Homodimeric cytokine expressed predominantly by T-lymphocytes and NK cells that plays an important role in the survival, differentiation, and chemotaxis of eosinophils. Also acts on activated and resting B-cells to induce immunoglobulin production, growth, and differentiation. Mechanistically, exerts its biological effects through a receptor composed of IL5RA subunit and the cytokine receptor common subunit beta/CSF2RB. Binding to the receptor leads to activation of various kinases including LYN, SYK and JAK2 and thereby propagates signals through the RAS-MAPK and JAK-STAT5 pathways respectively. The sequence is that of Interleukin-5 (IL5) from Ovis aries (Sheep).